Here is a 331-residue protein sequence, read N- to C-terminus: Zinc finger protein 660 (331 aa).

Positions 1–12 are enriched in basic residues; that stretch reads MRRKTRNFKHKT. Residues 1 to 35 are disordered; it reads MRRKTRNFKHKTVKDNKVLTEGSDQESEKDNSQCC. Serine 23 is modified (phosphoserine). 10 consecutive C2H2-type zinc fingers follow at residues 50–72, 78–100, 106–128, 134–156, 162–184, 190–212, 218–240, 246–268, 274–296, and 302–324; these read YVCTECGKAFSQSANLTVHERIH, YKCKECGKAFSHSSNLVVHRRIH, YTCSECGKSFSGKSHLIRHQGIH, YECKECGKAFSRSSGLISHHRVH, YSCIECGKAFSRSSNLTQHQRMH, YKCKECGKTCGSNTKIMDHQRIH, YECDECGKTFILRKTLNEHQRLH, YKCNECGKAFTSNRNLVDHQRVH, YKCNECGKTFRQTSQVILHLRTH, and YKCSECGKAYRYSSQLIQHQRKH.

This sequence belongs to the krueppel C2H2-type zinc-finger protein family.

The protein resides in the nucleus. May be involved in transcriptional regulation. In Homo sapiens (Human), this protein is Zinc finger protein 660 (ZNF660).